Here is a 325-residue protein sequence, read N- to C-terminus: MRVENNNVSGQNHDPEQIDLIDLLVQLWRGKMTIIISVIVAIALAIGYLAVAKEKWTSTAIITQPDVGQIAGYNNAMNVIYGQAAPKVSDLQETLIGRFSSAFSALAETLDNQEEPEKLTIEPSVKNQQLPLTVSYVGQTAEGAQMKLAQYIQQVDDKVNQELEKDLKDNIALGRKNLQDSLRTQEVVAQEQKDLRIRQIQEALQYANQAQVTKPQVQQTEDVTQDTLFLLGSEALESMIKHEATRPLVFSPNYYQTRQNLLDIEKLKFDDLDIHAYRYVMKPTLPIRRDSPKKAITLILAVLLGGMVGAGIVLGRNALRNYNAK.

Over 1 to 31 (MRVENNNVSGQNHDPEQIDLIDLLVQLWRGK) the chain is Cytoplasmic. The chain crosses the membrane as a helical span at residues 32-52 (MTIIISVIVAIALAIGYLAVA). At 53–294 (KEKWTSTAII…LPIRRDSPKK (242 aa)) the chain is on the periplasmic side. A helical transmembrane segment spans residues 295 to 315 (AITLILAVLLGGMVGAGIVLG). The Cytoplasmic portion of the chain corresponds to 316 to 325 (RNALRNYNAK).

It belongs to the WzzB/Cld/Rol family.

The protein localises to the cell inner membrane. Its pathway is bacterial outer membrane biogenesis; lipopolysaccharide biosynthesis. Its function is as follows. Confers a modal distribution of chain length on the O-antigen component of lipopolysaccharide (LPS). Gives rise to a reduced number of short chain molecules and increases in numbers of longer molecules. The protein is Chain length determinant protein (wzzB) of Shigella flexneri.